Reading from the N-terminus, the 148-residue chain is Deoxyuridine 5'-triphosphate nucleotidohydrolase (148 aa).

Substrate-binding positions include 68–70 (RSG), N81, 85–87 (TID), and K95.

The protein belongs to the dUTPase family. Mg(2+) is required as a cofactor.

The enzyme catalyses dUTP + H2O = dUMP + diphosphate + H(+). Its pathway is pyrimidine metabolism; dUMP biosynthesis; dUMP from dCTP (dUTP route): step 2/2. In terms of biological role, this enzyme is involved in nucleotide metabolism: it produces dUMP, the immediate precursor of thymidine nucleotides and it decreases the intracellular concentration of dUTP so that uracil cannot be incorporated into DNA. This chain is Deoxyuridine 5'-triphosphate nucleotidohydrolase, found in Rickettsia typhi (strain ATCC VR-144 / Wilmington).